A 269-amino-acid chain; its full sequence is MREIELWTAVLAGVVQGITEWLPISSEGQATMTMMKVLGIPPSTAMDLALWLHAGTLLAVLLRFGVPYWLTVRDLLMGGPWRRLGLFAIVATVCTAVVGLPVYKVLKGIFSAATGDAVQMAIGGALIVTGLLLRISPEGLRDRREVNVVDAVIVGLGQGFSVIPGISRSGTTMALLLWRRFDGGEAVWLSFYLAGPAMLGATALELKEGLSAATKMGTSWMVTAIGVSFVVSLICMEVLLRVARRLDFSKVCLLLGGIALLVPLAAKML.

The next 8 helical transmembrane spans lie at 4-24, 50-70, 86-106, 113-133, 146-166, 186-206, 220-240, and 246-266; these read IELW…WLPI, LWLH…PYWL, LFAI…YKVL, ATGD…GLLL, VNVV…IPGI, AVWL…ALEL, WMVT…EVLL, and LDFS…PLAA.

Belongs to the UppP family.

It localises to the cell membrane. It catalyses the reaction di-trans,octa-cis-undecaprenyl diphosphate + H2O = di-trans,octa-cis-undecaprenyl phosphate + phosphate + H(+). In terms of biological role, catalyzes the dephosphorylation of undecaprenyl diphosphate (UPP). This is Undecaprenyl-diphosphatase from Methanopyrus kandleri (strain AV19 / DSM 6324 / JCM 9639 / NBRC 100938).